A 231-amino-acid polypeptide reads, in one-letter code: Heptaprenylglyceryl phosphate synthase (231 aa).

Residue lysine 12 participates in sn-glycerol 1-phosphate binding. Residues aspartate 14 and threonine 40 each coordinate Mg(2+). Sn-glycerol 1-phosphate is bound by residues 159-164 (YMEYSG), glycine 189, and 209-210 (GN).

The protein belongs to the GGGP/HepGP synthase family. Group I subfamily. Homodimer. Mg(2+) is required as a cofactor.

The catalysed reaction is sn-glycerol 1-phosphate + all-trans-heptaprenyl diphosphate = 3-heptaprenyl-sn-glycero-1-phosphate + diphosphate. Its pathway is membrane lipid metabolism; glycerophospholipid metabolism. Its function is as follows. Prenyltransferase that catalyzes in vivo the transfer of the heptaprenyl moiety of heptaprenyl pyrophosphate (HepPP; 35 carbon atoms) to the C3 hydroxyl of sn-glycerol-1-phosphate (G1P), producing heptaprenylglyceryl phosphate (HepGP). This reaction is an ether-bond-formation step in the biosynthesis of archaea-type G1P-based membrane lipids found in Bacillales. The sequence is that of Heptaprenylglyceryl phosphate synthase from Brevibacillus brevis (strain 47 / JCM 6285 / NBRC 100599).